We begin with the raw amino-acid sequence, 157 residues long: Putative electron transport protein YsaA (157 aa).

4 consecutive 4Fe-4S ferredoxin-type domains span residues asparagine 2–cysteine 32, lysine 48–glycine 80, glycine 80–serine 109, and lysine 112–valine 144. 16 residues coordinate [4Fe-4S] cluster: cysteine 12, cysteine 15, cysteine 18, cysteine 22, cysteine 58, cysteine 61, cysteine 66, cysteine 70, cysteine 89, cysteine 92, cysteine 95, cysteine 99, cysteine 118, cysteine 121, cysteine 130, and cysteine 134.

This chain is Putative electron transport protein YsaA (ysaA), found in Escherichia coli (strain K12).